The chain runs to 270 residues: Phosphonates import ATP-binding protein PhnC 1 (270 aa).

The 244-residue stretch at 2-245 (LVVEGLTCRF…IARELYDLEA (244 aa)) folds into the ABC transporter domain. 34–41 (GRSGAGKS) contacts ATP.

It belongs to the ABC transporter superfamily. Phosphonates importer (TC 3.A.1.9.1) family. The complex is composed of two ATP-binding proteins (PhnC), two transmembrane proteins (PhnE) and a solute-binding protein (PhnD).

The protein localises to the cell inner membrane. The catalysed reaction is phosphonate(out) + ATP + H2O = phosphonate(in) + ADP + phosphate + H(+). Its function is as follows. Part of the ABC transporter complex PhnCDE involved in phosphonates import. Responsible for energy coupling to the transport system. The polypeptide is Phosphonates import ATP-binding protein PhnC 1 (Rhodopseudomonas palustris (strain ATCC BAA-98 / CGA009)).